Reading from the N-terminus, the 1088-residue chain is Protein unc-13 homolog D (1088 aa).

A disordered region spans residues 26–46 (VRDLQDPPPQATPEVQVQSHH). Positions 92-239 (QPEEHQQMLQ…FKEARKDKGQ (148 aa)) constitute a C2 1 domain. Residues aspartate 127 and aspartate 133 each contribute to the Ca(2+) site. Serine 150 carries the phosphoserine modification. Aspartate 206 and aspartate 208 together coordinate Ca(2+). The tract at residues 240-543 (DDFLGNVMLR…AKRVQDHTAA (304 aa)) is interaction with RAB27A. The region spanning 557-675 (FQLYVSLREF…RLALVYCSLI (119 aa)) is the MHD1 domain. An MHD2 domain is found at 786–893 (EDAILPLMKF…ASSRELIQKY (108 aa)). The 126-residue stretch at 908-1033 (RLGAVTVKAS…PGLTGCVEPG (126 aa)) folds into the C2 2 domain. Leucine 938, aspartate 939, aspartate 945, aspartate 1003, aspartate 1005, and aspartate 1011 together coordinate Ca(2+).

The protein belongs to the unc-13 family. As to quaternary structure, interacts with RAB27A and DOC2A. Interacts with RhoG; the interaction increases RhoG affinity to the membrane lipids, targets Unc13d to membrane lipids and facilitates cytotoxic granule (CG) docking to the plasma membrane. Ca(2+) serves as cofactor. Expressed in lung bronchial epithelium goblet/mucous cells. Also expressed in spleen and testis. Expressed at very low levels in heart muscle, kidney, liver, brain and skeletal muscle.

It localises to the cytoplasm. Its subcellular location is the membrane. The protein resides in the late endosome. It is found in the recycling endosome. The protein localises to the lysosome. Functionally, plays a role in cytotoxic granule exocytosis in lymphocytes. Required for both granule maturation and granule docking and priming at the immunologic synapse. Regulates assembly of recycling and late endosomal structures, leading to the formation of an endosomal exocytic compartment that fuses with perforin-containing granules at the immunologic synapse and licences them for exocytosis. Regulates Ca(2+)-dependent secretory lysosome exocytosis in mast cells. The polypeptide is Protein unc-13 homolog D (Unc13d) (Rattus norvegicus (Rat)).